The sequence spans 624 residues: Elongation factor 4 (624 aa).

In terms of domain architecture, tr-type G spans 17-203 (ALIRNFCIIA…RVVRDVPAPV (187 aa)). GTP-binding positions include 29–34 (DHGKST) and 150–153 (NKID).

This sequence belongs to the TRAFAC class translation factor GTPase superfamily. Classic translation factor GTPase family. LepA subfamily.

The protein resides in the cell membrane. The catalysed reaction is GTP + H2O = GDP + phosphate + H(+). Functionally, required for accurate and efficient protein synthesis under certain stress conditions. May act as a fidelity factor of the translation reaction, by catalyzing a one-codon backward translocation of tRNAs on improperly translocated ribosomes. Back-translocation proceeds from a post-translocation (POST) complex to a pre-translocation (PRE) complex, thus giving elongation factor G a second chance to translocate the tRNAs correctly. Binds to ribosomes in a GTP-dependent manner. This chain is Elongation factor 4, found in Streptomyces griseus subsp. griseus (strain JCM 4626 / CBS 651.72 / NBRC 13350 / KCC S-0626 / ISP 5235).